The chain runs to 353 residues: Photosystem II protein D1 (353 aa).

Threonine 2 is subject to N-acetylthreonine. Phosphothreonine is present on threonine 2. The next 3 helical transmembrane spans lie at 29–46 (YIGWFGVIMIPTLLTATS), 118–133 (HFFIGICCYMGREWEL), and 142–156 (WIAVAYSAPVAAATA). Position 118 (histidine 118) interacts with chlorophyll a. A pheophytin a-binding site is contributed by tyrosine 126. [CaMn4O5] cluster-binding residues include aspartate 170 and glutamate 189. Residues 197–218 (FHMLGVAGVFGGSLFSAMHGSL) traverse the membrane as a helical segment. A chlorophyll a-binding site is contributed by histidine 198. A quinone is bound by residues histidine 215 and 264 to 265 (SF). Position 215 (histidine 215) interacts with Fe cation. Histidine 272 is a Fe cation binding site. Residues 274–288 (FLAAWPVIGIWFTAL) traverse the membrane as a helical segment. Residues histidine 332, glutamate 333, aspartate 342, and alanine 344 each contribute to the [CaMn4O5] cluster site. Positions 345-353 (AFEAPSINA) are excised as a propeptide.

The protein belongs to the reaction center PufL/M/PsbA/D family. In terms of assembly, PSII is composed of 1 copy each of membrane proteins PsbA, PsbB, PsbC, PsbD, PsbE, PsbF, PsbH, PsbI, PsbJ, PsbK, PsbL, PsbM, PsbT, PsbX, PsbY, PsbZ, Psb30/Ycf12, at least 3 peripheral proteins of the oxygen-evolving complex and a large number of cofactors. It forms dimeric complexes. The D1/D2 heterodimer binds P680, chlorophylls that are the primary electron donor of PSII, and subsequent electron acceptors. It shares a non-heme iron and each subunit binds pheophytin, quinone, additional chlorophylls, carotenoids and lipids. D1 provides most of the ligands for the Mn4-Ca-O5 cluster of the oxygen-evolving complex (OEC). There is also a Cl(-1) ion associated with D1 and D2, which is required for oxygen evolution. The PSII complex binds additional chlorophylls, carotenoids and specific lipids. serves as cofactor. In terms of processing, tyr-161 forms a radical intermediate that is referred to as redox-active TyrZ, YZ or Y-Z. Post-translationally, C-terminally processed by CTPA; processing is essential to allow assembly of the oxygen-evolving complex and thus photosynthetic growth.

It localises to the plastid. It is found in the chloroplast thylakoid membrane. The catalysed reaction is 2 a plastoquinone + 4 hnu + 2 H2O = 2 a plastoquinol + O2. Functionally, photosystem II (PSII) is a light-driven water:plastoquinone oxidoreductase that uses light energy to abstract electrons from H(2)O, generating O(2) and a proton gradient subsequently used for ATP formation. It consists of a core antenna complex that captures photons, and an electron transfer chain that converts photonic excitation into a charge separation. The D1/D2 (PsbA/PsbD) reaction center heterodimer binds P680, the primary electron donor of PSII as well as several subsequent electron acceptors. The chain is Photosystem II protein D1 from Chlamydomonas moewusii (Chlamydomonas eugametos).